Reading from the N-terminus, the 418-residue chain is Gamma-glutamyl phosphate reductase (418 aa).

This sequence belongs to the gamma-glutamyl phosphate reductase family.

The protein localises to the cytoplasm. The enzyme catalyses L-glutamate 5-semialdehyde + phosphate + NADP(+) = L-glutamyl 5-phosphate + NADPH + H(+). Its pathway is amino-acid biosynthesis; L-proline biosynthesis; L-glutamate 5-semialdehyde from L-glutamate: step 2/2. In terms of biological role, catalyzes the NADPH-dependent reduction of L-glutamate 5-phosphate into L-glutamate 5-semialdehyde and phosphate. The product spontaneously undergoes cyclization to form 1-pyrroline-5-carboxylate. In Clostridium kluyveri (strain NBRC 12016), this protein is Gamma-glutamyl phosphate reductase.